The following is a 360-amino-acid chain: Peptide chain release factor 1 (360 aa).

Position 237 is an N5-methylglutamine (glutamine 237).

It belongs to the prokaryotic/mitochondrial release factor family. Post-translationally, methylated by PrmC. Methylation increases the termination efficiency of RF1.

The protein resides in the cytoplasm. Peptide chain release factor 1 directs the termination of translation in response to the peptide chain termination codons UAG and UAA. In Nitrosococcus oceani (strain ATCC 19707 / BCRC 17464 / JCM 30415 / NCIMB 11848 / C-107), this protein is Peptide chain release factor 1.